We begin with the raw amino-acid sequence, 262 residues long: Methylthioribulose-1-phosphate dehydratase (262 aa).

Substrate is bound at residue cysteine 115. Zn(2+) contacts are provided by histidine 133 and histidine 135. Glutamate 158 functions as the Proton donor/acceptor in the catalytic mechanism. A Zn(2+)-binding site is contributed by histidine 223.

Belongs to the aldolase class II family. MtnB subfamily. Zn(2+) serves as cofactor.

It localises to the cytoplasm. The catalysed reaction is 5-(methylsulfanyl)-D-ribulose 1-phosphate = 5-methylsulfanyl-2,3-dioxopentyl phosphate + H2O. The protein operates within amino-acid biosynthesis; L-methionine biosynthesis via salvage pathway; L-methionine from S-methyl-5-thio-alpha-D-ribose 1-phosphate: step 2/6. In terms of biological role, catalyzes the dehydration of methylthioribulose-1-phosphate (MTRu-1-P) into 2,3-diketo-5-methylthiopentyl-1-phosphate (DK-MTP-1-P). The protein is Methylthioribulose-1-phosphate dehydratase of Meyerozyma guilliermondii (strain ATCC 6260 / CBS 566 / DSM 6381 / JCM 1539 / NBRC 10279 / NRRL Y-324) (Yeast).